We begin with the raw amino-acid sequence, 115 residues long: Large ribosomal subunit protein bL19 (115 aa).

Belongs to the bacterial ribosomal protein bL19 family.

Functionally, this protein is located at the 30S-50S ribosomal subunit interface and may play a role in the structure and function of the aminoacyl-tRNA binding site. The sequence is that of Large ribosomal subunit protein bL19 (rplS) from Buchnera aphidicola subsp. Acyrthosiphon pisum (strain APS) (Acyrthosiphon pisum symbiotic bacterium).